We begin with the raw amino-acid sequence, 506 residues long: Maturase K (506 aa).

The protein belongs to the intron maturase 2 family. MatK subfamily.

The protein localises to the plastid. Its subcellular location is the chloroplast. In terms of biological role, usually encoded in the trnK tRNA gene intron. Probably assists in splicing its own and other chloroplast group II introns. This is Maturase K from Austrosteenisia blackii (Blood vine).